The following is a 240-amino-acid chain: ATP synthase subunit a 1 (240 aa).

Helical transmembrane passes span 23 to 43 (GQVL…SVLA), 82 to 102 (VPFI…GALF), 120 to 140 (DINT…YAGF), 186 to 206 (LVVA…VMLL), and 207 to 227 (GLFT…AYIH).

This sequence belongs to the ATPase A chain family. As to quaternary structure, F-type ATPases have 2 components, CF(1) - the catalytic core - and CF(0) - the membrane proton channel. CF(1) has five subunits: alpha(3), beta(3), gamma(1), delta(1), epsilon(1). CF(0) has four main subunits: a, b, b' and c.

The protein resides in the cellular thylakoid membrane. Its function is as follows. Key component of the proton channel; it plays a direct role in the translocation of protons across the membrane. The polypeptide is ATP synthase subunit a 1 (Acaryochloris marina (strain MBIC 11017)).